The primary structure comprises 631 residues: Phosphomethylpyrimidine synthase (631 aa).

Substrate-binding positions include Asn-239, Met-268, Tyr-297, His-333, 353–355, 394–397, and Glu-433; these read SRG and DGLR. His-437 contacts Zn(2+). Tyr-460 is a binding site for substrate. Position 501 (His-501) interacts with Zn(2+). Residues Cys-581, Cys-584, and Cys-589 each coordinate [4Fe-4S] cluster.

Belongs to the ThiC family. Homodimer. [4Fe-4S] cluster serves as cofactor.

The enzyme catalyses 5-amino-1-(5-phospho-beta-D-ribosyl)imidazole + S-adenosyl-L-methionine = 4-amino-2-methyl-5-(phosphooxymethyl)pyrimidine + CO + 5'-deoxyadenosine + formate + L-methionine + 3 H(+). It participates in cofactor biosynthesis; thiamine diphosphate biosynthesis. Its function is as follows. Catalyzes the synthesis of the hydroxymethylpyrimidine phosphate (HMP-P) moiety of thiamine from aminoimidazole ribotide (AIR) in a radical S-adenosyl-L-methionine (SAM)-dependent reaction. In Escherichia coli O8 (strain IAI1), this protein is Phosphomethylpyrimidine synthase.